We begin with the raw amino-acid sequence, 184 residues long: Ribosome-recycling factor (184 aa).

Belongs to the RRF family.

The protein resides in the cytoplasm. Responsible for the release of ribosomes from messenger RNA at the termination of protein biosynthesis. May increase the efficiency of translation by recycling ribosomes from one round of translation to another. The sequence is that of Ribosome-recycling factor from Borrelia turicatae (strain 91E135).